The primary structure comprises 348 residues: Probable tRNA pseudouridine synthase B (348 aa).

Asp93 acts as the Nucleophile in catalysis. In terms of domain architecture, PUA spans 260–335 (LKKIYILDSA…IAVDIERVFM (76 aa)).

It belongs to the pseudouridine synthase TruB family. Type 2 subfamily.

The catalysed reaction is uridine(55) in tRNA = pseudouridine(55) in tRNA. Functionally, could be responsible for synthesis of pseudouridine from uracil-55 in the psi GC loop of transfer RNAs. This is Probable tRNA pseudouridine synthase B from Nanoarchaeum equitans (strain Kin4-M).